We begin with the raw amino-acid sequence, 207 residues long: Protein Nef (207 aa).

A lipid anchor (N-myristoyl glycine; by host) is attached at G2. S6 is subject to Phosphoserine; by host. The tract at residues 62–66 (EEDSE) is acidic; interacts with host PACS1 and PACS2; stabilizes the interaction of NEF/MHC-I with host AP1M1; necessary for MHC-I internalization. Residues 70–79 (PVRPQVPLRP) form an SH3-binding; interaction with Src family tyrosine kinases region. The short motif at 73–76 (PQVP) is the PxxP; stabilizes the interaction of NEF/MHC-I with host AP1M1; necessary for MHC-I internalization element. The mediates dimerization, Nef-PTE1 interaction stretch occupies residues 109–125 (EILDLWVYNTQGYFPDW). Positions 149–181 (MDPAEVEEANKGENNSLLHPICQHGMEDEDREV) are binding to ATP6V1H. A Dileucine internalization motif; necessary for CD4 internalization motif is present at residues 165 to 166 (LL). The short motif at 175-176 (ED) is the Diacidic; necessary for CD4 internalization element.

This sequence belongs to the lentivirus primate group Nef protein family. Monomer; cytosolic form. Homodimer; membrane bound form. Interacts with Nef associated p21-activated kinase (PAK2); this interaction activates PAK2. Associates with the Nef-MHC-I-AP1 complex; this complex is required for MHC-I internalization. Interacts (via C-terminus) with host PI3-kinase. Interacts with host PACS1; this interaction seems to be weak. Interacts with host PACS2. Interacts with host LCK and MAPK3; these interactions inhibit the kinase activity of the latter. Interacts with host ATP6V1H; this interaction may play a role in CD4 endocytosis. Associates with the CD4-Nef-AP2 complex; this complex is required for CD4 internalization. Interacts with host AP2 subunit alpha and AP2 subunit sigma2. Interacts with TCR-zeta chain; this interaction up-regulates the Fas ligand (FasL) surface expression. Interacts with host HCK, LYN, and SRC; these interactions activate the Src family kinases. Interacts with MAP3K5; this interaction inhibits the Fas and TNFR-mediated death signals. Interacts with beta-COP and PTE1. Interacts with human RACK1; this increases Nef phosphorylation by PKC. Interacts with TP53; this interaction decreases the half-life of TP53, protecting the infected cell against p53-mediated apoptosis. In terms of processing, the virion-associated Nef proteins are cleaved by the viral protease to release the soluble C-terminal core protein. Nef is probably cleaved concomitantly with viral structural proteins on maturation of virus particles. Myristoylated. Post-translationally, phosphorylated on serine residues, probably by host PKCdelta and theta.

It localises to the host cell membrane. The protein localises to the virion. The protein resides in the secreted. It is found in the host Golgi apparatus membrane. Functionally, factor of infectivity and pathogenicity, required for optimal virus replication. Alters numerous pathways of T-lymphocyte function and down-regulates immunity surface molecules in order to evade host defense and increase viral infectivity. Alters the functionality of other immunity cells, like dendritic cells, monocytes/macrophages and NK cells. Its function is as follows. In infected CD4(+) T-lymphocytes, down-regulates the surface MHC-I, mature MHC-II, CD4, CD28, CCR5 and CXCR4 molecules. Mediates internalization and degradation of host CD4 through the interaction of with the cytoplasmic tail of CD4, the recruitment of AP-2 (clathrin adapter protein complex 2), internalization through clathrin coated pits, and subsequent transport to endosomes and lysosomes for degradation. Diverts host MHC-I molecules to the trans-Golgi network-associated endosomal compartments by an endocytic pathway to finally target them for degradation. MHC-I down-regulation may involve AP-1 (clathrin adapter protein complex 1) or possibly Src family kinase-ZAP70/Syk-PI3K cascade recruited by PACS2. In consequence infected cells are masked for immune recognition by cytotoxic T-lymphocytes. Decreasing the number of immune receptors also prevents reinfection by more HIV particles (superinfection). Down-regulates host SERINC3 and SERINC5 thereby excluding these proteins from the viral particles. Virion infectivity is drastically higher when SERINC3 or SERINC5 are excluded from the viral envelope, because these host antiviral proteins impair the membrane fusion event necessary for subsequent virion penetration. In terms of biological role, bypasses host T-cell signaling by inducing a transcriptional program nearly identical to that of anti-CD3 cell activation. Interaction with TCR-zeta chain up-regulates the Fas ligand (FasL). Increasing surface FasL molecules and decreasing surface MHC-I molecules on infected CD4(+) cells send attacking cytotoxic CD8+ T-lymphocytes into apoptosis. Plays a role in optimizing the host cell environment for viral replication without causing cell death by apoptosis. Protects the infected cells from apoptosis in order to keep them alive until the next virus generation is ready to strike. Inhibits the Fas and TNFR-mediated death signals by blocking MAP3K5/ASK1. Decreases the half-life of TP53, protecting the infected cell against p53-mediated apoptosis. Inhibits the apoptotic signals regulated by the Bcl-2 family proteins through the formation of a Nef/PI3-kinase/PAK2 complex that leads to activation of PAK2 and induces phosphorylation of host BAD. Functionally, extracellular Nef protein targets CD4(+) T-lymphocytes for apoptosis by interacting with CXCR4 surface receptors. The sequence is that of Protein Nef from Homo sapiens (Human).